Consider the following 912-residue polypeptide: MPSLPQDGVIQGSSPVDLGTELPYQCTMKRKVRKKKKKGIITANVAGTKFEIVRLVIDEMGFMKTPDEDETSNLIWCDAAVQQEKITDLQNYQRINHFPGMGEICRKDFLARNMTKMIKSRPMDYTFVPRTWIFPSEYTQFQNYVKELKKKRKQKTFIVKPANGAMGHGISLIRNGDKVPSQDHLIVQEYIEKPFLMEGYKFDLRIYILVTSCDPLKIFLYHDGLVRMGTEKYIPPNESNLTQLYMHLTNYSVNKHNERFERNETEDKGSKRSIKWFTEFLQANQHDVTKFWSDISELVVKTLIVAEPHVLHAYRMCRPGQPPGSESVCFEVLGFDILLDRKLKPWLLEINRAPSFGTDQKIDYDVKRGVLLNALKLLNIRTSDKRKNLAKQKAEAQRRLYGQNPVRRLSPGSSDWEQQRHQLERRKEELKERLLQVRKQVSQEEHENRHMGNYRRIYPPEDKALLEKYEGLLAVAFQTFLSGRAASFQREMNNPLKKMREEDLLDLLEQCEIDDEKLMGKTGRVRGPKPLCCMPECAEVTKKQKYYGSSDSSYDSSSSSSNSELDENEKELCQKRLDQVPYSLKHTSHCKIIQQPSGSHNLIYSESPVYLTTLVFLSEFPDSMRRSVSCPRSISAHLPSRGDVRPFSSQQVIPLARPTSASRSHSLNRASSYARHLPHGSDTGSTNTLNESLRQLKTKEQEDDLTSQTLFVLKDMRIRFPGKSDAESELLIEDIMDNWKHYKTKVASYWLIKLDSVKQRKVLDIVKSSIRTVLPRIWRVPDAEELSLYRIFNRVFNRLLWSHGQGLWSCFCDSGSSWESIFSKSPEVVTPLQLQCCQRLVELCKQCLLVVYKYTTETRGPISGIGPDWGNSRYLLPGSTQFLMRSPLYNMKYNSPGMTRSNVLFTSRYGRL.

The region spanning 38 to 390 (KGIITANVAG…RTSDKRKNLA (353 aa)) is the TTL domain. ATP-binding positions include Lys160, 166-167 (MG), 188-191 (QEYI), and 201-203 (KFD). Arg227 is a binding site for L-glutamate. ATP is bound at residue 249-250 (TN). Tyr251, Ser252, and Lys271 together coordinate L-glutamate. The Mg(2+) site is built by Asp336, Glu349, and Asn351. Lys367 serves as a coordination point for L-glutamate. The tract at residues 388 to 450 (NLAKQKAEAQ…VSQEEHENRH (63 aa)) is c-MTBD region. Disordered stretches follow at residues 547–570 (YGSSDSSYDSSSSSSNSELDENEK) and 658–688 (PTSASRSHSLNRASSYARHLPHGSDTGSTNT). A compositionally biased stretch (low complexity) spans 549–563 (SSDSSYDSSSSSSNS). The segment covering 659-671 (TSASRSHSLNRAS) has biased composition (polar residues).

The protein belongs to the tubulin--tyrosine ligase family. In terms of assembly, interacts with both alpha- and beta-tubulin (via C-terminal tubulin tails). Requires Mg(2+) as cofactor. Highly expressed in brain, testis and trachea. Expressed in brain, heart, kidney, liver, lung, muscle and trachea. In the brain, highly expressed in hippocampus, thalamus, olfactory bulb and cerebellum cortex, corpus callosum and striatum.

Its subcellular location is the cell projection. The protein localises to the cilium. The protein resides in the cytoplasm. It is found in the cytoskeleton. It localises to the cilium basal body. Its subcellular location is the dendrite. The protein localises to the perikaryon. The catalysed reaction is L-glutamyl-[protein] + L-glutamate + ATP = gamma-L-glutamyl-L-glutamyl-[protein] + ADP + phosphate + H(+). The enzyme catalyses (L-glutamyl)(n)-gamma-L-glutamyl-L-glutamyl-[protein] + L-glutamate + ATP = (L-glutamyl)(n+1)-gamma-L-glutamyl-L-glutamyl-[protein] + ADP + phosphate + H(+). Functionally, polyglutamylase which modifies tubulin, generating polyglutamate side chains of variable lengths on the gamma-carboxyl group of specific glutamate residues within the C-terminal tail of tubulin. Mediates both ATP-dependent initiation and elongation steps of the polyglutamylation reaction. Preferentially modifies the beta-tubulin tail over an alpha-tail. Competes with monoglycylase TTLL3 for modification site on beta-tubulin substrate, thereby creating an anticorrelation between glycylation and glutamylation reactions. Required for neurite growth; responsible for the strong increase in tubulin polyglutamylation during postnatal neuronal maturation. This is Tubulin polyglutamylase TTLL7 from Mus musculus (Mouse).